The sequence spans 417 residues: Serine hydroxymethyltransferase (417 aa).

(6S)-5,6,7,8-tetrahydrofolate is bound by residues Leu-120 and 124-126 (GHL). Lys-229 carries the post-translational modification N6-(pyridoxal phosphate)lysine. 354–356 (SPF) provides a ligand contact to (6S)-5,6,7,8-tetrahydrofolate.

This sequence belongs to the SHMT family. As to quaternary structure, homodimer. Pyridoxal 5'-phosphate serves as cofactor.

The protein resides in the cytoplasm. It carries out the reaction (6R)-5,10-methylene-5,6,7,8-tetrahydrofolate + glycine + H2O = (6S)-5,6,7,8-tetrahydrofolate + L-serine. Its pathway is one-carbon metabolism; tetrahydrofolate interconversion. The protein operates within amino-acid biosynthesis; glycine biosynthesis; glycine from L-serine: step 1/1. Its function is as follows. Catalyzes the reversible interconversion of serine and glycine with tetrahydrofolate (THF) serving as the one-carbon carrier. This reaction serves as the major source of one-carbon groups required for the biosynthesis of purines, thymidylate, methionine, and other important biomolecules. Also exhibits THF-independent aldolase activity toward beta-hydroxyamino acids, producing glycine and aldehydes, via a retro-aldol mechanism. The protein is Serine hydroxymethyltransferase of Acinetobacter radioresistens.